The following is a 975-amino-acid chain: MGVPAFFRWLTKKYPATVVNANEDRQRDQDGNRVPVDCTQPNPNFQEFDNLYLDMNGIIHPCTHPEDRPAPKNEDEMFALIFEYIDRIYSIVRPRRLLYMAIDGVAPRAKMNQQRSRRFRASKEMAEKEASIEEQRNRLMAEGIAVPPKKKEEAHFDSNCITPGTPFMARLADALRYYIHDRVTNDASWANIEIILSDANVPGEGEHKIMDYVRKQRGNPAHDPNTVHCLCGADADLIMLGIATHEANFNIIREEFVPNQPRACDLCGQYGHELKECRGAENETDLGDDYCKPEQREKNFIFLRIPVLREYLEKELSMPNLPFKFDVERALDDWVFLCFFVGNDFLPHLPSLEIREGAIDRLIKLYKEMVYQMKGYLTKDGIPELDRVEMIMKGLGRVEDEIFKRRQQDEERFQENQRNKKARMQMYGGGGRGGRGRGRGRGQQPAFVPTHGILAPMAAPMHHSGESTRQMASEARQTAMKFTNDANETAAANLKALLNVKGEESPADIASRKRKAEQPLIKPEEEEDEGPKDDIRLYESGWKDRYYRAKFDVGSDDIEFRHRVAWAYVEGLCWVLRYYYQGCASWDWYFPYHYAPFASDFETVGEFQPDFTRPTKPFNPLEQLMSVFPAASKQHLPVEWQKLMIQDDSPIIDLYPADFRIDLNGKKYAWQGVALLPFVDETRLLATLQSVYPTLTAEEKQRNTRGPNRIFIGRNHKSFEFFQQVAESKSDDLVPLDPTLLNGVSGKIAYDSTATAPGLPFVSPVNHDECQDLPTNCGICVLYEDPEYPQDYIFPALRLDGAKEPEKTLKPDDWNDRRDGRYQPQVGFNRNAPRGSLDQSGHRQVHHYVRGGGGGGGGYRGNSYDDRRGGGGGGGGYNDRQDFGRNYGGRDGGGPQRYHDQQQQRQGGYQGGGYGGGYGGGGGGGGGGGGGSYHQPYNQDQRRGGRGGGGGPPGYQRPPYRGGGGGGYHGNSSWR.

The segment at 262–279 (RACDLCGQYGHELKECRG) adopts a CCHC-type zinc-finger fold. Disordered stretches follow at residues 424–443 (MQMYGGGGRGGRGRGRGRGQ) and 505–532 (SPADIASRKRKAEQPLIKPEEEEDEGPK). An interaction with paxt-1 region spans residues 534 to 787 (DIRLYESGWK…GICVLYEDPE (254 aa)). The span at 804-821 (EPEKTLKPDDWNDRRDGR) shows a compositional bias: basic and acidic residues. The disordered stretch occupies residues 804–975 (EPEKTLKPDD…GGYHGNSSWR (172 aa)). Gly residues-rich tracts occupy residues 850-860 (RGGGGGGGGYR), 886-895 (NYGGRDGGGP), and 908-932 (GYQGGGYGGGYGGGGGGGGGGGGGS).

Belongs to the 5'-3' exonuclease family. XRN2/RAT1 subfamily. Interacts with paxt-1 (via N-terminus); the interaction is direct and results in stabilization of xrn-2 in the complex. As to expression, expressed in the pharyngeal myoepithelium and intestine. Also expressed in several anterior neurons including the sensory neurons, as well as the interneuron PVT and the pharyngeal motorneuron M5.

Its subcellular location is the nucleus. Its function is as follows. Possesses 5'-&gt;3' exoribonuclease activity. Plays a role in maintenance of steady-state concentration and turnover of microRNAs (miRNA) by degradation of mature miRNA. Degradation role is enhanced when in complex with paxt-1. Partially redundant to xrn-1 in miRNA guide strand degradation. Implicated in differential regulation of mRNAs such as let-7 by controlling the accumulation of mature miRNA. Positively regulates molting of the pharyngeal cuticle. The protein is 5'-3' exoribonuclease 2 homolog of Caenorhabditis elegans.